Here is a 169-residue protein sequence, read N- to C-terminus: Gametocyte-specific factor 1-like (169 aa).

CHHC U11-48K-type zinc fingers lie at residues 6-33 and 40-67; these read LETC…RRKN and MASC…VNKS. Cys-9, His-15, His-25, Cys-29, Cys-43, His-49, His-59, and Cys-63 together coordinate Zn(2+). Disordered regions lie at residues 67 to 103 and 131 to 169; these read STME…LPNP and SDTR…LLKA. The segment covering 131 to 158 has biased composition (basic and acidic residues); the sequence is SDTRESETDDHNPIPDCPRRRSSDRESE.

The protein belongs to the UPF0224 (FAM112) family.

This Bos taurus (Bovine) protein is Gametocyte-specific factor 1-like (GTSF1L).